Reading from the N-terminus, the 235-residue chain is Sugar fermentation stimulation protein homolog (235 aa).

It belongs to the SfsA family.

This is Sugar fermentation stimulation protein homolog from Aliivibrio fischeri (strain ATCC 700601 / ES114) (Vibrio fischeri).